We begin with the raw amino-acid sequence, 328 residues long: Ketol-acid reductoisomerase (NADP(+)) (328 aa).

The 181-residue stretch at 2-182 folds into the KARI N-terminal Rossmann domain; that stretch reads AKIYTDREAS…GATRAGVIET (181 aa). Residues 25-28, Arg48, Ser53, and 83-86 each bind NADP(+); these read YGIQ and DMEQ. Residue His108 is part of the active site. Residue Gly134 participates in NADP(+) binding. Residues 183-328 enclose the KARI C-terminal knotted domain; the sequence is TFAEETETDL…EEMRKLLFGP (146 aa). Mg(2+) contacts are provided by Asp191, Glu195, Glu227, and Glu231. A substrate-binding site is contributed by Ser252.

Belongs to the ketol-acid reductoisomerase family. The cofactor is Mg(2+).

The enzyme catalyses (2R)-2,3-dihydroxy-3-methylbutanoate + NADP(+) = (2S)-2-acetolactate + NADPH + H(+). It carries out the reaction (2R,3R)-2,3-dihydroxy-3-methylpentanoate + NADP(+) = (S)-2-ethyl-2-hydroxy-3-oxobutanoate + NADPH + H(+). The protein operates within amino-acid biosynthesis; L-isoleucine biosynthesis; L-isoleucine from 2-oxobutanoate: step 2/4. It functions in the pathway amino-acid biosynthesis; L-valine biosynthesis; L-valine from pyruvate: step 2/4. Functionally, involved in the biosynthesis of branched-chain amino acids (BCAA). Catalyzes an alkyl-migration followed by a ketol-acid reduction of (S)-2-acetolactate (S2AL) to yield (R)-2,3-dihydroxy-isovalerate. In the isomerase reaction, S2AL is rearranged via a Mg-dependent methyl migration to produce 3-hydroxy-3-methyl-2-ketobutyrate (HMKB). In the reductase reaction, this 2-ketoacid undergoes a metal-dependent reduction by NADPH to yield (R)-2,3-dihydroxy-isovalerate. The sequence is that of Ketol-acid reductoisomerase (NADP(+)) from Pyrobaculum aerophilum (strain ATCC 51768 / DSM 7523 / JCM 9630 / CIP 104966 / NBRC 100827 / IM2).